A 410-amino-acid chain; its full sequence is Dephospho-CoA kinase (410 aa).

Positions 3–201 constitute a DPCK domain; sequence CIGITGGIGA…HRILPFAYNL (199 aa). An ATP-binding site is contributed by 11–16; sequence GAGKSL. Residues 196-410 are UPF0157; that stretch reads PFAYNLSQRQ…EWADSTGWRL (215 aa).

In the N-terminal section; belongs to the CoaE family. The protein in the C-terminal section; belongs to the UPF0157 (GrpB) family.

The protein resides in the cytoplasm. The enzyme catalyses 3'-dephospho-CoA + ATP = ADP + CoA + H(+). The protein operates within cofactor biosynthesis; coenzyme A biosynthesis; CoA from (R)-pantothenate: step 5/5. Its function is as follows. Catalyzes the phosphorylation of the 3'-hydroxyl group of dephosphocoenzyme A to form coenzyme A. The chain is Dephospho-CoA kinase from Mycobacterium leprae (strain TN).